The chain runs to 311 residues: Probable porphobilinogen deaminase (311 aa).

C237 carries the post-translational modification S-(dipyrrolylmethanemethyl)cysteine. The segment at 270–289 (SKTGDKNNPKSLGQSAGEEL) is disordered.

The protein belongs to the HMBS family. The cofactor is dipyrromethane.

It carries out the reaction 4 porphobilinogen + H2O = hydroxymethylbilane + 4 NH4(+). Its pathway is porphyrin-containing compound metabolism; protoporphyrin-IX biosynthesis; coproporphyrinogen-III from 5-aminolevulinate: step 2/4. In terms of biological role, tetrapolymerization of the monopyrrole PBG into the hydroxymethylbilane pre-uroporphyrinogen in several discrete steps. The polypeptide is Probable porphobilinogen deaminase (Nitrosopumilus maritimus (strain SCM1)).